Reading from the N-terminus, the 144-residue chain is 3-hydroxyacyl-[acyl-carrier-protein] dehydratase FabZ (144 aa).

H48 is a catalytic residue.

This sequence belongs to the thioester dehydratase family. FabZ subfamily.

It localises to the cytoplasm. The enzyme catalyses a (3R)-hydroxyacyl-[ACP] = a (2E)-enoyl-[ACP] + H2O. Involved in unsaturated fatty acids biosynthesis. Catalyzes the dehydration of short chain beta-hydroxyacyl-ACPs and long chain saturated and unsaturated beta-hydroxyacyl-ACPs. The polypeptide is 3-hydroxyacyl-[acyl-carrier-protein] dehydratase FabZ (Bacillus anthracis (strain A0248)).